A 639-amino-acid polypeptide reads, in one-letter code: Protein sly1 homolog (639 aa).

4 tandem repeats follow at residues 85-121, 203-245, 423-460, and 464-500. The segment at 85–500 is 4 X approximate repeats; sequence DENLDRIQQD…QATQYEGGGT (416 aa).

Belongs to the STXBP/unc-18/SEC1 family. In terms of tissue distribution, in embryos, from stage 14, expression is seen in posterior midgut, esophagus and salivary glands. No expression is seen in larval imaginal disks.

The protein resides in the cytoplasm. It localises to the membrane. Non-vital for development. This Drosophila melanogaster (Fruit fly) protein is Protein sly1 homolog (Slh).